The primary structure comprises 604 residues: Sulfite reductase [NADPH] flavoprotein alpha-component (604 aa).

Positions 65-203 constitute a Flavodoxin-like domain; that stretch reads VTILYGSQTG…AAGQWHADVL (139 aa). Residues 71–76, 118–121, and 154–163 contribute to the FMN site; these read SQTGNG, STHG, and LGDSSYEFFC. The region spanning 236-453 is the FAD-binding FR-type domain; sequence QNPYSAEVLV…VEPNKHFRLP (218 aa). FAD contacts are provided by residues Thr324, Leu358, 392–395, 410–412, and 425–428; these read RLYS, TVA, and GGAS. NADP(+) is bound by residues 524–525, 530–534, and Asp566; these read SR and KIYVQ. Tyr604 contributes to the FAD binding site.

It belongs to the NADPH-dependent sulphite reductase flavoprotein subunit CysJ family. This sequence in the N-terminal section; belongs to the flavodoxin family. In the C-terminal section; belongs to the flavoprotein pyridine nucleotide cytochrome reductase family. As to quaternary structure, alpha(8)-beta(8). The alpha component is a flavoprotein, the beta component is a hemoprotein. FAD serves as cofactor. The cofactor is FMN.

The catalysed reaction is hydrogen sulfide + 3 NADP(+) + 3 H2O = sulfite + 3 NADPH + 4 H(+). The protein operates within sulfur metabolism; hydrogen sulfide biosynthesis; hydrogen sulfide from sulfite (NADPH route): step 1/1. Component of the sulfite reductase complex that catalyzes the 6-electron reduction of sulfite to sulfide. This is one of several activities required for the biosynthesis of L-cysteine from sulfate. The flavoprotein component catalyzes the electron flow from NADPH -&gt; FAD -&gt; FMN to the hemoprotein component. This Shewanella sp. (strain MR-4) protein is Sulfite reductase [NADPH] flavoprotein alpha-component.